The sequence spans 199 residues: FMN-dependent NADH:quinone oxidoreductase 2 (199 aa).

FMN is bound by residues Ser-10, 16-18 (SVS), and 96-99 (MYNF).

Belongs to the azoreductase type 1 family. As to quaternary structure, homodimer. FMN serves as cofactor.

It catalyses the reaction 2 a quinone + NADH + H(+) = 2 a 1,4-benzosemiquinone + NAD(+). The catalysed reaction is N,N-dimethyl-1,4-phenylenediamine + anthranilate + 2 NAD(+) = 2-(4-dimethylaminophenyl)diazenylbenzoate + 2 NADH + 2 H(+). Functionally, quinone reductase that provides resistance to thiol-specific stress caused by electrophilic quinones. In terms of biological role, also exhibits azoreductase activity. Catalyzes the reductive cleavage of the azo bond in aromatic azo compounds to the corresponding amines. The chain is FMN-dependent NADH:quinone oxidoreductase 2 from Pseudomonas fluorescens (strain ATCC BAA-477 / NRRL B-23932 / Pf-5).